Reading from the N-terminus, the 1243-residue chain is MDSFTPPLLSDSLQMAMEVENEKSNPPCFSCIFDNQNGGRSFSGESYLASGSLKRVLLRLDPSPNDYEEDAIEMFGFQWVTETALVESCGLLFGLLRQQIYKLEDLIEMNSSDFGKAANLHSEAENIRRLCINFLHYVKVFIFRYLEPPKTENDGVLHPYEELEAQFPSLLVEELHSLTLHIGHLCELPSNVLAAFTIQHQAKIFPPSWHLLHLHLDIHWLVLEILHVLSEKMMRQVVYANHFINLTGENLTNISLFETHCENLISDLISLSIQKYTKVRPSEALTSHHYPCNCIKELWILLIQLLGFRNKGSQTECFWSLVNKKLKSIFERPTSSESVSVFGTTQCKDPLSFSLWIVTHLASLYQFDRNGNLEEKKQKESNWKFVEELLKNSIGAQTGVLEEHLRMHLQCCLTLCRFWDWNLSVITILWDYYSKNLNSCFTVPWLGLKGLASISKTSLSMLELVKSCCCEQQIPTLYKSSNSYLIFLSILARMMKEEAESSGVHPWKQIKGRIYSKFHRKRMQELTEVGLQNFFNLFLLLAIVAETEDIVSRVLDLLDFLTPSLVSPSQRALIWRGHFAFLLIYVEKNMDISVLAEKLSNAFRVKAKEFLVTKNDYTQKQNLWTLISTYIDGVQEVFETSCYLSLSEEKLLNDGFTMLLPACRGAELSMVLNFLQVVIARLRSVHKRVSQGLQPGNADSNAQLPLVAKEHHLAVASALWRNFFPYLKSQRMSQTPPSPQLADTAAGFALLALDIPSKALSDLQPQPVLSMMQLFGWDDMVWPHLVSRYLSHLIQNSALCEAFSTMGYTSYEALTVRSWFRCVLQMFIDQPSGTLAKTDAERTVGKAYMEQLTEMTRLIFKLKEVESILSKARVEEPVLKQDPKNALVQFIKAVGRTYSGLQTLPEKSAMVLKALEYLGDVLKYVKPYLKAKGPPEGLQLAYWIIGCLVKFWAPILATSKAQQLLFRIIDCLLLPHSVLQQDKELPGALLSAIQESLHLYLQGLSFICCQSQARGAYLNQLLGSIVQQYFGRFLPPSPTALGAGQHPMLTALCSSITVPQALRLRKTTLHVINEHYMQFKGSAPPPRLASVLAFILEVLQRTQASELCDVELVLPAVLKCMVLVNELQVKKISTVIVQYMVQGCQARSGGEHATQLTSVFRQFIQDYTAVYDHRVFSILETVAVLDQTLVTSLIPTLTQSLKDSEYKQGLGRNAAQREAYKRLLTHLSEAGQNEIQKLENEAG.

Belongs to the MMS22 family. MMS22L subfamily. Component of the MMS22L-TONSL complex.

The protein resides in the nucleus. It is found in the chromosome. Functionally, component of the MMS22L-TONSL complex, a complex that promotes homologous recombination-mediated repair of double-strand breaks (DSBs) at stalled or collapsed replication forks. The MMS22L-TONSL complex is required to maintain genome integrity during DNA replication. It mediates the assembly of RAD51 filaments on single-stranded DNA (ssDNA): the MMS22L-TONSL complex is recruited to DSBs following histone replacement by histone chaperones and eviction of the replication protein A complex (RPA/RP-A) from DSBs. Following recruitment to DSBs, the TONSL-MMS22L complex promotes recruitment of RAD51 filaments and subsequent homologous recombination. Within the complex, MMS22L acts by binding ssDNA. The polypeptide is Protein MMS22-like (MMS22L) (Gallus gallus (Chicken)).